Here is a 231-residue protein sequence, read N- to C-terminus: GTP-binding protein RHO3 (231 aa).

23–30 (GDGACGKT) lines the GTP pocket. The Effector region signature appears at 45–53 (YEPTVFENY). Residues 70–74 (DTAGQ) and 128–131 (LKCD) contribute to the GTP site. Positions 139–150 (SNAITPNNIQQD) are enriched in polar residues. The tract at residues 139–165 (SNAITPNNIQQDNSVSNDNGNNINSTS) is disordered. The span at 151-165 (NSVSNDNGNNINSTS) shows a compositional bias: low complexity. C228 carries the cysteine methyl ester modification. C228 is lipidated: S-farnesyl cysteine. The propeptide at 229 to 231 (TIM) is removed in mature form.

The protein belongs to the small GTPase superfamily. Rho family. As to quaternary structure, interacts with TOS7.

Its subcellular location is the cell membrane. Its activity is regulated as follows. Activity is positively regulated by the GTPase activating protein (GAP) RGD1. Its function is as follows. Plays an important role in cell growth. Required to keep the uninucleated state. Modulates morphogenesis during bud growth via directing organization of the actin cytoskeleton and the position of the secretory machinery for exocytosis. In Saccharomyces cerevisiae (strain ATCC 204508 / S288c) (Baker's yeast), this protein is GTP-binding protein RHO3.